The sequence spans 418 residues: Dihydrolipoyllysine-residue acetyltransferase component of pyruvate dehydrogenase complex (418 aa).

Residues 2 to 78 enclose the Lipoyl-binding domain; that stretch reads PIKLLMPALS…PVNSLIAVLI (77 aa). The residue at position 43 (Lys43) is an N6-lipoyllysine. The Peripheral subunit-binding (PSBD) domain occupies 133-170; the sequence is FASPLAKRLAKIQNVRIEEIKGSGPHGRIIKQDVLSHK. The active site involves His388.

This sequence belongs to the 2-oxoacid dehydrogenase family. As to quaternary structure, forms a 24-polypeptide structural core with octahedral symmetry. (R)-lipoate is required as a cofactor.

It carries out the reaction N(6)-[(R)-dihydrolipoyl]-L-lysyl-[protein] + acetyl-CoA = N(6)-[(R)-S(8)-acetyldihydrolipoyl]-L-lysyl-[protein] + CoA. Its function is as follows. The pyruvate dehydrogenase complex catalyzes the overall conversion of pyruvate to acetyl-CoA and CO(2). It contains multiple copies of three enzymatic components: pyruvate dehydrogenase (E1), dihydrolipoamide acetyltransferase (E2) and lipoamide dehydrogenase (E3). This chain is Dihydrolipoyllysine-residue acetyltransferase component of pyruvate dehydrogenase complex (pdhC), found in Rickettsia bellii (strain RML369-C).